The sequence spans 286 residues: Pyridoxal kinase PdxY (286 aa).

Substrate contacts are provided by residues Ser-9 and 44 to 45 (TQ). ATP is bound by residues Asp-111, Glu-148, and Lys-181. Residue Asp-222 coordinates substrate.

It belongs to the pyridoxine kinase family. PdxY subfamily. As to quaternary structure, homodimer. Mg(2+) serves as cofactor.

The enzyme catalyses pyridoxal + ATP = pyridoxal 5'-phosphate + ADP + H(+). Its pathway is cofactor metabolism; pyridoxal 5'-phosphate salvage; pyridoxal 5'-phosphate from pyridoxal: step 1/1. Its function is as follows. Pyridoxal kinase involved in the salvage pathway of pyridoxal 5'-phosphate (PLP). Catalyzes the phosphorylation of pyridoxal to PLP. The polypeptide is Pyridoxal kinase PdxY (Actinobacillus succinogenes (strain ATCC 55618 / DSM 22257 / CCUG 43843 / 130Z)).